Reading from the N-terminus, the 194-residue chain is MTNHEQDQQDNSELLDDDQVTLESQQAADSGAEAPASDDVAALQAEIARLNEELQTTKENALRAAAEAQNARRRAEQDVEKAHKFGLEKFVGDILPVADNLERAIDAAKAEGADLGVVVEGVELTLKTLVDGLKRHKVEQIDPQGEPFDPQLHQAMTMIEQPDVEPNTVINVFQRGYTLHGRLVRPAMVVVSKA.

The disordered stretch occupies residues 1–39 (MTNHEQDQQDNSELLDDDQVTLESQQAADSGAEAPASDD). Residues 8–20 (QQDNSELLDDDQV) are compositionally biased toward acidic residues.

Belongs to the GrpE family. As to quaternary structure, homodimer.

Its subcellular location is the cytoplasm. In terms of biological role, participates actively in the response to hyperosmotic and heat shock by preventing the aggregation of stress-denatured proteins, in association with DnaK and GrpE. It is the nucleotide exchange factor for DnaK and may function as a thermosensor. Unfolded proteins bind initially to DnaJ; upon interaction with the DnaJ-bound protein, DnaK hydrolyzes its bound ATP, resulting in the formation of a stable complex. GrpE releases ADP from DnaK; ATP binding to DnaK triggers the release of the substrate protein, thus completing the reaction cycle. Several rounds of ATP-dependent interactions between DnaJ, DnaK and GrpE are required for fully efficient folding. The polypeptide is Protein GrpE (Saccharophagus degradans (strain 2-40 / ATCC 43961 / DSM 17024)).